A 234-amino-acid chain; its full sequence is Thymidylate kinase (234 aa).

An ATP-binding site is contributed by 10–17 (GGEGSGKT).

The protein belongs to the thymidylate kinase family.

The catalysed reaction is dTMP + ATP = dTDP + ADP. Functionally, phosphorylation of dTMP to form dTDP in both de novo and salvage pathways of dTTP synthesis. This is Thymidylate kinase from Cyanothece sp. (strain PCC 7425 / ATCC 29141).